The chain runs to 346 residues: Histone PARylation factor 1 (346 aa).

Residue Met-1 is modified to N-acetylmethionine. The span at 1-10 shows a compositional bias: basic residues; it reads MVGGGAKRRL. The tract at residues 1 to 29 is disordered; the sequence is MVGGGAKRRLRGEGPQCEKPVDMKKSKSC. The residue at position 19 (Lys-19) is an N6-acetyllysine. The segment covering 19–29 has biased composition (basic and acidic residues); sequence KPVDMKKSKSC. The residue at position 97 (Ser-97) is an ADP-ribosylserine. An N6-acetyllysine mark is found at Lys-186 and Lys-233. At Asp-235 the chain carries PolyADP-ribosyl aspartic acid. At Tyr-238 the chain carries ADP-ribosyltyrosine. Residue Glu-240 is modified to PolyADP-ribosyl glutamic acid. Residues 242–346 form an interaction with PARP1 region; sequence PETDASLRRI…SQDDVDQLAA (105 aa). Catalysis depends on Glu-284, which acts as the Proton donor.

It belongs to the HPF1 family. In terms of assembly, interacts with PARP1 (via the PARP catalytic domain). Interacts with PARP2 (via the PARP catalytic domain). Interacts with core nucleosomes in a PARP1- and PARP2-dependent manner.

The protein localises to the chromosome. It localises to the nucleus. Cofactor for serine ADP-ribosylation that confers serine specificity on PARP1 and PARP2 and plays a key role in DNA damage response. Initiates the repair of double-strand DNA breaks: recruited to DNA damage sites by PARP1 and PARP2 and switches the amino acid specificity of PARP1 and PARP2 from aspartate or glutamate to serine residues, licensing serine ADP-ribosylation of target proteins. Serine ADP-ribosylation of target proteins, such as histones, promotes decompaction of chromatin and the recruitment of repair factors leading to the reparation of DNA strand breaks. Serine ADP-ribosylation of proteins constitutes the primary form of ADP-ribosylation of proteins in response to DNA damage. HPF1 acts by completing the active site of PARP1 and PARP2: forms a composite active site composed of residues from HPF1 and PARP1 or PARP2. While HPF1 promotes the initiation of serine ADP-ribosylation, it restricts the polymerase activity of PARP1 and PARP2 in order to limit the length of poly-ADP-ribose chains. HPF1 also promotes tyrosine ADP-ribosylation, probably by conferring tyrosine specificity on PARP1. In Bos taurus (Bovine), this protein is Histone PARylation factor 1.